The primary structure comprises 831 residues: Cysteine--tRNA ligase, cytoplasmic (831 aa).

An N-acetylalanine modification is found at Ala2. Ser102 is subject to Phosphoserine. Cys138 provides a ligand contact to Zn(2+). Gly139 contacts L-cysteine. Residues 140–150 (PTVYDASHMGH) carry the 'HIGH' region motif. Thr179 contacts L-cysteine. The short motif at 184-187 (KIIR) is the 'KIIK' region element. Phosphoserine is present on residues Ser388 and Ser390. Residues Cys431, His456, and Glu460 each coordinate Zn(2+). His456 contacts L-cysteine. The 'KMSKS' region signature appears at 489–493 (KMSKS). Lys492 serves as a coordination point for ATP. Basic and acidic residues predominate over residues 736-762 (GKKRAEEEKRRKKEEAARKKQEQEAAK). Positions 736 to 766 (GKKRAEEEKRRKKEEAARKKQEQEAAKLAKM) are disordered. Ser829 carries the phosphoserine modification.

This sequence belongs to the class-I aminoacyl-tRNA synthetase family. In terms of assembly, homodimer. Requires Zn(2+) as cofactor.

It is found in the cytoplasm. It carries out the reaction tRNA(Cys) + L-cysteine + ATP = L-cysteinyl-tRNA(Cys) + AMP + diphosphate. Its function is as follows. Catalyzes the ATP-dependent ligation of cysteine to tRNA(Cys). The chain is Cysteine--tRNA ligase, cytoplasmic (Cars1) from Mus musculus (Mouse).